Consider the following 183-residue polypeptide: Maltose O-acetyltransferase (183 aa).

Asn83 contributes to the acetyl-CoA binding site. Residue His113 is the Proton donor/acceptor of the active site. Acetyl-CoA-binding positions include Gly140, Ser158, 163–164 (TK), Arg178, and Lys181.

The protein belongs to the transferase hexapeptide repeat family. As to quaternary structure, homodimer.

The enzyme catalyses D-maltose + acetyl-CoA = 1-O-acetylmaltose + CoA. Its function is as follows. Catalyzes the CoA-dependent transfer of an acetyl group to maltose and other sugars. Acetylates glucose exclusively at the C6 position and maltose at the C6 position of the non-reducing end glucosyl moiety. Is able to acetylate maltooligosaccharides. This is Maltose O-acetyltransferase (maa) from Escherichia coli (strain K12).